The chain runs to 120 residues: MKVSRRESTRRRHRRVRRTIVGTPARPRLSVFRSNNHIYAQVIDDAAGHTLAAASSLDPDLRQSLTSGGNQQASAAVGKLIAERAQAKGVTTVVFDRGGNLYHGRVKALAEAAREAGLEF.

It belongs to the universal ribosomal protein uL18 family. Part of the 50S ribosomal subunit; part of the 5S rRNA/L5/L18/L25 subcomplex. Contacts the 5S and 23S rRNAs.

This is one of the proteins that bind and probably mediate the attachment of the 5S RNA into the large ribosomal subunit, where it forms part of the central protuberance. This is Large ribosomal subunit protein uL18 from Synechococcus elongatus (strain ATCC 33912 / PCC 7942 / FACHB-805) (Anacystis nidulans R2).